The chain runs to 80 residues: Mu-conotoxin BuIIIC (80 aa).

An N-terminal signal peptide occupies residues 1 to 22; that stretch reads MMSKLGVLLTICLLLFPLFALP. The propeptide occupies 23–51; the sequence is QDGDQPADRPAERMQDDLSSEQHPLFEKR. 3 disulfides stabilise this stretch: cysteine 56–cysteine 70, cysteine 57–cysteine 76, and cysteine 66–cysteine 77. Cysteine 77 is modified (cysteine amide).

It belongs to the conotoxin M superfamily. In terms of tissue distribution, expressed by the venom duct.

It is found in the secreted. Functionally, mu-conotoxins block voltage-gated sodium channels. Extremely potent inhibitor of Nav1.4/SCN4A (96% inhibition at 1 uM). The inhibition is very slowly reversible. This is Mu-conotoxin BuIIIC from Conus bullatus (Bubble cone).